Consider the following 194-residue polypeptide: Protein cholesin (194 aa).

Positions 1–83 (MAKQKRKVPE…RKKEERQRLR (83 aa)) are disordered. Phosphoserine occurs at positions 23 and 59. Positions 61–83 (EEQRVLERKLKKERKKEERQRLR) are enriched in basic and acidic residues. Serine 97 and serine 175 each carry phosphoserine.

Secreted from the instestine, secretion is induced by feeding and cholesterol absorption.

The protein localises to the secreted. In terms of biological role, hormone secreted from the intestine in response to cholesterol, where it acts to inhibit cholesterol synthesis in the liver and VLDL secretion,leading to a reduction in circulating cholesterol levels. Acts through binding to its receptor, GPR146. The polypeptide is Protein cholesin (Homo sapiens (Human)).